A 226-amino-acid chain; its full sequence is Large ribosomal subunit protein uL1 (226 aa).

Belongs to the universal ribosomal protein uL1 family. In terms of assembly, part of the 50S ribosomal subunit.

Functionally, binds directly to 23S rRNA. The L1 stalk is quite mobile in the ribosome, and is involved in E site tRNA release. Its function is as follows. Protein L1 is also a translational repressor protein, it controls the translation of the L11 operon by binding to its mRNA. The protein is Large ribosomal subunit protein uL1 of Treponema pallidum (strain Nichols).